The sequence spans 70 residues: Cold shock-like protein CspJ (70 aa).

One can recognise a CSD domain in the interval 7 to 67 (GLVKWFNPEK…GPKGPSAVNV (61 aa)).

It is found in the cytoplasm. In Salmonella typhi, this protein is Cold shock-like protein CspJ (cspJ).